Reading from the N-terminus, the 575-residue chain is Transcription factor ncaA (575 aa).

Polar residues-rich tracts occupy residues Met-1–Asn-15 and Asp-22–Pro-34. 2 disordered regions span residues Met-1–Arg-40 and Ile-79–Glu-114. The UBZ4-type; degenerate zinc-finger motif lies at Asp-39–Lys-66. Basic and acidic residues predominate over residues Gly-93–Met-102. Residues Phe-337 to Cys-371 are a coiled coil. The tract at residues Gly-429–Ala-575 is disordered. The segment covering Leu-440–Glu-454 has biased composition (basic and acidic residues). The segment covering Glu-455–Pro-471 has biased composition (low complexity). Over residues Ser-472–Gly-485 the composition is skewed to pro residues. Composition is skewed to polar residues over residues Asp-493–Tyr-513 and Ser-538–Leu-558.

Interacts with atrR.

The protein resides in the nucleus. Its function is as follows. Transcription factor required for normal voriconazole resistance. Contributes to the function of atrR and regulates the expression of the atrR target gene abcG1. In Aspergillus fumigatus (strain ATCC MYA-4609 / CBS 101355 / FGSC A1100 / Af293) (Neosartorya fumigata), this protein is Transcription factor ncaA.